A 245-amino-acid polypeptide reads, in one-letter code: OCIA domain-containing protein 1 (245 aa).

Residues 1 to 112 (MNGRADFREP…KKLENSPLGE (112 aa)) enclose the OCIA domain. Residues serine 108, serine 116, serine 123, and serine 191 each carry the phosphoserine modification. Disordered stretches follow at residues 111–141 (GEAL…VSGQ) and 169–245 (NESA…TWDE). Basic and acidic residues-rich tracts occupy residues 190 to 210 (ESPK…RESY) and 224 to 238 (PMHE…KVNK).

This sequence belongs to the OCIAD1 family. As to quaternary structure, interacts with OCIAD2. Interacts with STAT3. In terms of tissue distribution, isoform 1 is highly expressed in many tissues, including testis, brain, placenta, ovary, prostate and mammary gland. Isoform 2 expression is restricted to the central nervous system including brain, cerebellum and spinal cord.

It is found in the endosome. In terms of biological role, maintains stem cell potency. Increases STAT3 phosphorylation and controls ERK phosphorylation. May act as a scaffold, increasing STAT3 recruitment onto endosomes. Involved in integrin-mediated cancer cell adhesion and colony formation in ovarian cancer. The polypeptide is OCIA domain-containing protein 1 (Homo sapiens (Human)).